A 258-amino-acid polypeptide reads, in one-letter code: Imidazole glycerol phosphate synthase subunit HisF (258 aa).

Catalysis depends on residues Asp11 and Asp130.

Belongs to the HisA/HisF family. Heterodimer of HisH and HisF.

The protein localises to the cytoplasm. The catalysed reaction is 5-[(5-phospho-1-deoxy-D-ribulos-1-ylimino)methylamino]-1-(5-phospho-beta-D-ribosyl)imidazole-4-carboxamide + L-glutamine = D-erythro-1-(imidazol-4-yl)glycerol 3-phosphate + 5-amino-1-(5-phospho-beta-D-ribosyl)imidazole-4-carboxamide + L-glutamate + H(+). The protein operates within amino-acid biosynthesis; L-histidine biosynthesis; L-histidine from 5-phospho-alpha-D-ribose 1-diphosphate: step 5/9. Functionally, IGPS catalyzes the conversion of PRFAR and glutamine to IGP, AICAR and glutamate. The HisF subunit catalyzes the cyclization activity that produces IGP and AICAR from PRFAR using the ammonia provided by the HisH subunit. In Magnetococcus marinus (strain ATCC BAA-1437 / JCM 17883 / MC-1), this protein is Imidazole glycerol phosphate synthase subunit HisF.